A 432-amino-acid chain; its full sequence is Transcriptional adapter 3-A (432 aa).

Disordered stretches follow at residues 90 to 127 and 275 to 314; these read HELGTPIKHSKPKKQKLDGKVSHASGPGPGRPKSRNMQ and SPVEDSPIPEISGKESGTDGASTSPRSQNKPFSAPHTKSL. Over residues 293–305 the composition is skewed to polar residues; that stretch reads DGASTSPRSQNKP. Positions 335–398 form a coiled coil; it reads ADDSEDEVLA…NEVMDAFRKI (64 aa).

The protein belongs to the NGG1 family.

Its subcellular location is the nucleus. Its function is as follows. Functions as a component of the PCAF complex. The PCAF complex is capable of efficiently acetylating histones in a nucleosomal context. In Xenopus laevis (African clawed frog), this protein is Transcriptional adapter 3-A (tada3-a).